A 226-amino-acid chain; its full sequence is uncharacterized protein (226 aa).

Residues 203-225 traverse the membrane as a helical segment; that stretch reads FGISDIYTSTLSFGLIISLFYLL.

The protein resides in the membrane. This is an uncharacterized protein from Acanthamoeba polyphaga (Amoeba).